The chain runs to 374 residues: Alcohol dehydrogenase class-3 (374 aa).

Ser2 is modified (N-acetylserine). Zn(2+)-binding residues include Cys45, His67, Cys97, Cys100, Cys103, Cys111, and Cys174. The residue at position 233 (Lys233) is an N6-succinyllysine. At Ser247 the chain carries Phosphoserine. The residue at position 315 (Lys315) is an N6-succinyllysine. Ser324 and Ser351 each carry phosphoserine.

It belongs to the zinc-containing alcohol dehydrogenase family. Class-III subfamily. In terms of assembly, homodimer. Requires Zn(2+) as cofactor.

Its subcellular location is the cytoplasm. It carries out the reaction a primary alcohol + NAD(+) = an aldehyde + NADH + H(+). The catalysed reaction is a secondary alcohol + NAD(+) = a ketone + NADH + H(+). The enzyme catalyses S-(hydroxymethyl)glutathione + NADP(+) = S-formylglutathione + NADPH + H(+). It catalyses the reaction S-(hydroxymethyl)glutathione + NAD(+) = S-formylglutathione + NADH + H(+). It carries out the reaction 20-oxo-(5Z,8Z,11Z,14Z)-eicosatetraenoate + NAD(+) + H2O = (5Z,8Z,11Z,14Z)-eicosatetraenedioate + NADH + 2 H(+). The catalysed reaction is 20-hydroxy-(5Z,8Z,11Z,14Z)-eicosatetraenoate + NAD(+) = 20-oxo-(5Z,8Z,11Z,14Z)-eicosatetraenoate + NADH + H(+). The enzyme catalyses S-nitrosoglutathione + NADH + H(+) = S-(hydroxysulfenamide)glutathione + NAD(+). Its function is as follows. Catalyzes the oxidation of long-chain primary alcohols and the oxidation of S-(hydroxymethyl) glutathione. Also oxidizes long chain omega-hydroxy fatty acids, such as 20-HETE, producing both the intermediate aldehyde, 20-oxoarachidonate and the end product, a dicarboxylic acid, (5Z,8Z,11Z,14Z)-eicosatetraenedioate. Class-III ADH is remarkably ineffective in oxidizing ethanol. Required for clearance of cellular formaldehyde, a cytotoxic and carcinogenic metabolite that induces DNA damage. Also acts as a S-nitroso-glutathione reductase by catalyzing the NADH-dependent reduction of S-nitrosoglutathione, thereby regulating protein S-nitrosylation. The sequence is that of Alcohol dehydrogenase class-3 from Equus caballus (Horse).